The sequence spans 100 residues: Replication restart protein PriB (100 aa).

One can recognise an SSB domain in the interval 1–99 (MGFNNLVSLA…LRIQNIQEYK (99 aa)).

The protein belongs to the PriB family. As to quaternary structure, homodimer. Interacts with PriA and DnaT. Component of the replication restart primosome. Primosome assembly occurs via a 'hand-off' mechanism. PriA binds to replication forks, subsequently PriB then DnaT bind; DnaT then displaces ssDNA to generate the helicase loading substrate.

Its function is as follows. Involved in the restart of stalled replication forks, which reloads the replicative helicase on sites other than the origin of replication; the PriA-PriB pathway is the major replication restart pathway. During primosome assembly it facilitates complex formation between PriA and DnaT on DNA; stabilizes PriA on DNA. Stimulates the DNA unwinding activity of PriA helicase. The protein is Replication restart protein PriB of Neisseria meningitidis serogroup A / serotype 4A (strain DSM 15465 / Z2491).